Reading from the N-terminus, the 393-residue chain is Phosphoglycerate kinase (393 aa).

Substrate is bound by residues 21-23 (DFN), 59-62 (HLGR), Arg118, and Arg151. ATP contacts are provided by residues Lys201, Glu323, and 349–352 (GGDT).

It belongs to the phosphoglycerate kinase family. Monomer.

It is found in the cytoplasm. It carries out the reaction (2R)-3-phosphoglycerate + ATP = (2R)-3-phospho-glyceroyl phosphate + ADP. The protein operates within carbohydrate degradation; glycolysis; pyruvate from D-glyceraldehyde 3-phosphate: step 2/5. This is Phosphoglycerate kinase from Pelotomaculum thermopropionicum (strain DSM 13744 / JCM 10971 / SI).